The chain runs to 703 residues: Zinc finger CCCH domain-containing protein 36 (703 aa).

Disordered stretches follow at residues Met-1–Gly-42, Leu-112–Lys-176, Val-204–Ser-242, and His-442–Gln-481. Low complexity predominate over residues Gly-9–Gly-25. A compositionally biased stretch (basic and acidic residues) spans Leu-112–Gly-125. The segment covering Val-149–Pro-169 has biased composition (polar residues). The C3H1-type zinc-finger motif lies at Lys-176–Glu-203. Positions Thr-451–Gly-468 are enriched in basic and acidic residues. Low complexity predominate over residues Ser-470–Gln-481.

This Oryza sativa subsp. japonica (Rice) protein is Zinc finger CCCH domain-containing protein 36.